The chain runs to 132 residues: ATP synthase epsilon chain (132 aa).

It belongs to the ATPase epsilon chain family. In terms of assembly, F-type ATPases have 2 components, CF(1) - the catalytic core - and CF(0) - the membrane proton channel. CF(1) has five subunits: alpha(3), beta(3), gamma(1), delta(1), epsilon(1). CF(0) has three main subunits: a, b and c.

It localises to the cell membrane. In terms of biological role, produces ATP from ADP in the presence of a proton gradient across the membrane. This Brevibacillus brevis (strain 47 / JCM 6285 / NBRC 100599) protein is ATP synthase epsilon chain.